A 525-amino-acid polypeptide reads, in one-letter code: uncharacterized protein (525 aa).

Ser55 is subject to Phosphoserine. The next 13 helical transmembrane spans lie at Ala81 to Tyr101, Leu120 to Leu140, Lys147 to Ala167, Leu173 to Gly193, Met208 to Val228, Trp238 to Pro258, Phe295 to Ile315, Gly318 to Ile338, Tyr350 to Leu370, Phe388 to Cys408, Ile413 to Trp433, Ala454 to Phe474, and Ala484 to Gly504.

The protein belongs to the major facilitator superfamily. CAR1 family.

Its subcellular location is the membrane. This is an uncharacterized protein from Schizosaccharomyces pombe (strain 972 / ATCC 24843) (Fission yeast).